The following is a 1124-amino-acid chain: Phytochrome A1 (1124 aa).

Positions 1–14 (MSSSRPSQSSTTSA) are enriched in low complexity. Residues 1 to 20 (MSSSRPSQSSTTSARSKHSA) form a disordered region. The GAF domain maps to 218-401 (SMERLCDTMV…VFAIHVNKEL (184 aa)). Position 323 (Cys323) interacts with phytochromobilin. The PAS 1 domain maps to 617–687 (VTAEMVRLIE…KMLELALQGK (71 aa)). One can recognise a PAC domain in the interval 690–746 (RNVEFEIKTHGPSGDSSPISLIVNACASRDVGDSVVGVCFIAQDITGQKNIMDKFTR). One can recognise a PAS 2 domain in the interval 747-821 (IEGDYRAIIQ…KNQEAFVNFG (75 aa)). Positions 901–1118 (YIRRQIRNPL…TFIISVELAV (218 aa)) constitute a Histidine kinase domain.

The protein belongs to the phytochrome family. As to quaternary structure, homodimer. Post-translationally, contains one covalently linked phytochromobilin chromophore.

In terms of biological role, regulatory photoreceptor which exists in two forms that are reversibly interconvertible by light: the Pr form that absorbs maximally in the red region of the spectrum and the Pfr form that absorbs maximally in the far-red region. Photoconversion of Pr to Pfr induces an array of morphogenic responses, whereas reconversion of Pfr to Pr cancels the induction of those responses. Pfr controls the expression of a number of nuclear genes including those encoding the small subunit of ribulose-bisphosphate carboxylase, chlorophyll A/B binding protein, protochlorophyllide reductase, rRNA, etc. It also controls the expression of its own gene(s) in a negative feedback fashion. In Nicotiana tabacum (Common tobacco), this protein is Phytochrome A1 (PHYA1).